A 181-amino-acid chain; its full sequence is Capsid protein VP4 (181 aa).

It localises to the virion. Its function is as follows. VP4 self-assembles to form, together with capsid protein VP10, an icosahedral caspid of 87 nm in diameter, with a T=43 symmetry and composed of 420 hexamers and 12 pentamers. VP4 proteins arrange into hexons, while VP10 proteins form the pentameric densities located at the 5-fold axes in the virion. The stoichiometry of VP4:VP10 is 42:1. This is Capsid protein VP4 from Sulfolobus (SPV1).